Reading from the N-terminus, the 321-residue chain is MVQQAVIQRSANQRATNQPTEYIGRFAPSPSGDLHFGSLIAALGSYLQARAQGGKWLVRIEDIDPPREVPGAASRILAALEHYGLHWDGPVIYQSQRHEAYRATLNWLEQQGLSYYCTCTRSRIHQLGGFYDGYCRDRHLPASGAAIRLRQTQPVYAFYDKLLGELHAHPALAQEDFIIRRRDGLFAYNLAVVVDDAFQGVTEIVRGADLIEPTVRQIALYQQLQHPVPGYIHLPLALNNQGNKLSKQNHAPPLPNGDPRPILIDALKFLRQPLPEYWQDLDLYLLLRYAVKHWTLVSIPLQGAITPQKTQRHSQSKYGEL.

L-glutamate-binding positions include 25–29 (RFAPS) and glutamate 61. The 'HIGH' region signature appears at 28 to 38 (PSPSGDLHFGS). Cysteine 117, cysteine 119, tyrosine 131, and cysteine 135 together coordinate Zn(2+). Positions 188 and 206 each coordinate L-glutamate. The short motif at 244–248 (KLSKQ) is the 'KMSKS' region element. Lysine 247 contacts ATP.

This sequence belongs to the class-I aminoacyl-tRNA synthetase family. GluQ subfamily. Zn(2+) is required as a cofactor.

Its function is as follows. Catalyzes the tRNA-independent activation of glutamate in presence of ATP and the subsequent transfer of glutamate onto a tRNA(Asp). Glutamate is transferred on the 2-amino-5-(4,5-dihydroxy-2-cyclopenten-1-yl) moiety of the queuosine in the wobble position of the QUC anticodon. This chain is Glutamyl-Q tRNA(Asp) synthetase, found in Yersinia pestis.